The sequence spans 204 residues: Probable GTP-binding protein EngB (204 aa).

Positions 23–195 constitute an EngB-type G domain; it reads TLPEIAFVGR…ASALMQLLAM (173 aa). Residues 31–38, 58–62, 76–79, 143–146, and 174–176 each bind GTP; these read GRSNVGKS, GRTRE, DLPG, TKID, and FSA. Positions 38 and 60 each coordinate Mg(2+).

Belongs to the TRAFAC class TrmE-Era-EngA-EngB-Septin-like GTPase superfamily. EngB GTPase family. It depends on Mg(2+) as a cofactor.

Its function is as follows. Necessary for normal cell division and for the maintenance of normal septation. The sequence is that of Probable GTP-binding protein EngB from Gemmatimonas aurantiaca (strain DSM 14586 / JCM 11422 / NBRC 100505 / T-27).